Consider the following 397-residue polypeptide: Argininosuccinate synthase (397 aa).

Residue 9 to 17 (AYSGGLDTS) participates in ATP binding. Tyrosine 87 contacts L-citrulline. Glycine 117 serves as a coordination point for ATP. Residues threonine 119, asparagine 123, and aspartate 124 each contribute to the L-aspartate site. Position 123 (asparagine 123) interacts with L-citrulline. Residues arginine 127, serine 175, serine 184, glutamate 257, and tyrosine 269 each contribute to the L-citrulline site.

It belongs to the argininosuccinate synthase family. Type 1 subfamily. Homotetramer.

It localises to the cytoplasm. It catalyses the reaction L-citrulline + L-aspartate + ATP = 2-(N(omega)-L-arginino)succinate + AMP + diphosphate + H(+). The protein operates within amino-acid biosynthesis; L-arginine biosynthesis; L-arginine from L-ornithine and carbamoyl phosphate: step 2/3. This is Argininosuccinate synthase from Dictyoglomus turgidum (strain DSM 6724 / Z-1310).